The chain runs to 120 residues: uncharacterized protein (120 aa).

It belongs to the asp23 family.

This is an uncharacterized protein from Bacillus subtilis (strain 168).